The sequence spans 472 residues: L-fuculokinase (472 aa).

Belongs to the FGGY kinase family. A divalent metal cation is required as a cofactor.

It catalyses the reaction L-fuculose + ATP = L-fuculose 1-phosphate + ADP + H(+). It functions in the pathway carbohydrate degradation; L-fucose degradation; L-lactaldehyde and glycerone phosphate from L-fucose: step 2/3. Its function is as follows. Catalyzes the phosphorylation of L-fuculose. Can also phosphorylate, with lower efficiency, D-ribulose, D-xylulose and D-fructose. The polypeptide is L-fuculokinase (Escherichia coli (strain K12)).